An 82-amino-acid polypeptide reads, in one-letter code: Small ribosomal subunit protein uS17 (82 aa).

Belongs to the universal ribosomal protein uS17 family. Part of the 30S ribosomal subunit.

In terms of biological role, one of the primary rRNA binding proteins, it binds specifically to the 5'-end of 16S ribosomal RNA. The sequence is that of Small ribosomal subunit protein uS17 from Shewanella amazonensis (strain ATCC BAA-1098 / SB2B).